The chain runs to 791 residues: MTRKMPTLVRPTHNGERYEITNPTAMPKAAGFLWNQKMMIQITCRGFATAQFMQPEPAKYAYAPNIEAKTFMQPEPNYYAHHPGRFVYIKDEETGRLFSAPYEPVRAPHDRFVFSAGKTDVFWVIESMGIRVEMTMGLPTHHVAELWTIKVKNLSSRPRKLSVTPYFPIGYMSWMNQSAEWNHNLNGIVASCVTPYQKAADYFKNKYLKDKTYFLCDVPPDSWEASQQAFEGEGGLHNPSALQERNLSGSDARYETPTAAVQYKIALGTGEQQEYRFLFGPAHDEAEIGAMRSKYLSKEGFEQTAADYAAYMARGRGCLHVETPDKDLDNFINNWLPRQVYYHGDVNRLTTDPQTRNYLQDNMGMNYIKPEVSRRAFLTAIAQQEATGAMPDGILLVEGAELKYINQVPHTDHCVWLPVTLEAYLNETGDYSLLKEKVPSANGDKLTVFERFCRAMDWLLKSRDHRGLSYIAQGDWCDPMNMVGYKGKGVSGWLTLATAFSLNIWAKVCDHEGETDLAKRFREGADACNAAANEHLWDGEWFARGITDDNVVFGIKEDKEGRIWLNPQSWSILSGAASPEQIDKMLPQIDSHLNTPYGIQMFGPPYTKMREDVGRVTQKAIGSAENAAVYNHAGIFFIHSLYELGAQQDRAFTLLRQMLPGPTDTDYIQRGQLPIYIPNYYRGAWKECPRTAGRSSQLFNTGTVSWVYRCIIEGLCGLRGDGEGLLIRPQLPSSWNSMKVTREFRGATFNVDIRRGNVKEVTVRNGDKVLPAPHVKDIEPGQTYNLTVTIP.

Residue D478 is the Proton donor of the active site.

Belongs to the glycosyl hydrolase 94 family. Cellobionic acid phosphorylase subfamily. Homodimer.

The catalysed reaction is 4-O-beta-D-glucopyranosyl-D-gluconate + phosphate = D-gluconate + alpha-D-glucose 1-phosphate. It functions in the pathway glycan metabolism; cellulose degradation. Functionally, catalyzes the reversible phosphorolysis of cellobionic acid (4-O-beta-D-glucopyranosyl-D-gluconate), a probable step in cellulose degradation. May be part of a metabolic pathway where cellobionic acid is converted into alpha-D-glucose 1-phosphate and D-gluconic acid to enter glycolysis and the pentose phosphate pathway, respectively. Produces 4-O-beta-D-glucopyranosyl-D-glucuronate from alpha-D-glucose 1-phosphate and D-glucuronate with low activity in the synthetic direction. This is Cellobionic acid phosphorylase from Neurospora crassa (strain ATCC 24698 / 74-OR23-1A / CBS 708.71 / DSM 1257 / FGSC 987).